Reading from the N-terminus, the 350-residue chain is DNA-directed RNA polymerase subunit alpha (350 aa).

Residues 1–226 form an alpha N-terminal domain (alpha-NTD) region; it reads MLISQRPTLS…ELFGLARELN (226 aa). The segment at 241-350 is alpha C-terminal domain (alpha-CTD); sequence ADHIASFALP…NQDYAETEQL (110 aa). The segment at 328-350 is disordered; it reads GTWTSDAGYDLDDNQDYAETEQL. The segment covering 336 to 350 has biased composition (acidic residues); it reads YDLDDNQDYAETEQL.

Belongs to the RNA polymerase alpha chain family. As to quaternary structure, homodimer. The RNAP catalytic core consists of 2 alpha, 1 beta, 1 beta' and 1 omega subunit. When a sigma factor is associated with the core the holoenzyme is formed, which can initiate transcription.

It catalyses the reaction RNA(n) + a ribonucleoside 5'-triphosphate = RNA(n+1) + diphosphate. DNA-dependent RNA polymerase catalyzes the transcription of DNA into RNA using the four ribonucleoside triphosphates as substrates. The sequence is that of DNA-directed RNA polymerase subunit alpha from Mycolicibacterium smegmatis (strain ATCC 700084 / mc(2)155) (Mycobacterium smegmatis).